The following is a 179-amino-acid chain: Ribosome maturation factor RimP (179 aa).

It belongs to the RimP family.

Its subcellular location is the cytoplasm. Its function is as follows. Required for maturation of 30S ribosomal subunits. The polypeptide is Ribosome maturation factor RimP (Prosthecochloris aestuarii (strain DSM 271 / SK 413)).